Consider the following 940-residue polypeptide: Bifunctional uridylyltransferase/uridylyl-removing enzyme (940 aa).

Positions 1 to 379 are uridylyltransferase; the sequence is MPRRLRPTRL…PGARPKRKAL (379 aa). A uridylyl-removing region spans residues 380 to 736; the sequence is DVEGFYEDGG…GQVRPGSNAA (357 aa). In terms of domain architecture, HD spans 496-618; sequence VDEHTLRAVG…VENPERLRLL (123 aa). 2 consecutive ACT domains span residues 737 to 821 and 848 to 929; these read EVVI…PRRG and VVEA…AARP.

It belongs to the GlnD family. Mg(2+) is required as a cofactor.

It carries out the reaction [protein-PII]-L-tyrosine + UTP = [protein-PII]-uridylyl-L-tyrosine + diphosphate. The enzyme catalyses [protein-PII]-uridylyl-L-tyrosine + H2O = [protein-PII]-L-tyrosine + UMP + H(+). Its activity is regulated as follows. Uridylyltransferase (UTase) activity is inhibited by glutamine, while glutamine activates uridylyl-removing (UR) activity. Functionally, modifies, by uridylylation and deuridylylation, the PII regulatory proteins (GlnB and homologs), in response to the nitrogen status of the cell that GlnD senses through the glutamine level. Under low glutamine levels, catalyzes the conversion of the PII proteins and UTP to PII-UMP and PPi, while under higher glutamine levels, GlnD hydrolyzes PII-UMP to PII and UMP (deuridylylation). Thus, controls uridylylation state and activity of the PII proteins, and plays an important role in the regulation of nitrogen assimilation and metabolism. In Caulobacter vibrioides (strain ATCC 19089 / CIP 103742 / CB 15) (Caulobacter crescentus), this protein is Bifunctional uridylyltransferase/uridylyl-removing enzyme.